The primary structure comprises 171 residues: MKYTIVPAPRNLHDYVLELLEEWHPDCLDCEYPNGSPSPPTLHDLFDVELETSHPFVGLCDSCAEADTDSSASTEGDSGFSPLSTPPVSPIPPHPTSPASISDDMLLCLEEMPTFDDEDEVRSAATTFERWENTFDPHVGPIFGCLRCAFYQEQDDNALCGLCYPKGPCRR.

Positions 40–48 are interaction with RB1 in competition with E2F1; that stretch reads PTLHDLFDV. A disordered region spans residues 67–96; it reads DTDSSASTEGDSGFSPLSTPPVSPIPPHPT. A compositionally biased stretch (pro residues) spans 84–96; sequence STPPVSPIPPHPT. Positions 106–110 match the LXCXE motif, interaction with host RB1 motif; it reads LLCLE. A zinc finger spans residues 145 to 163; it reads CLRCAFYQEQDDNALCGLC. Residues 166–171 carry the Nuclear localization signal motif; sequence KGPCRR.

It belongs to the adenoviridae E1A protein family. In terms of assembly, interacts with host UBE2I; this interaction interferes with polySUMOylation. Interacts with host RB1; this interaction induces the aberrant dissociation of RB1-E2F1 complex thereby disrupting the activity of RB1 and activating E2F1-regulated genes. Interacts with host ATF7; the interaction enhances ATF7-mediated viral transactivation activity which requires the zinc binding domains of both proteins. Isoform early E1A 32 kDa protein and isoform early E1A 26 kDa protein interact (via N-terminus) with CUL1 and E3 ubiquitin ligase RBX1; these interactions inhibit RBX1-CUL1-dependent elongation reaction of ubiquitin chains and attenuate ubiquitination of SCF(FBXW7) target proteins. Interacts (via PXLXP motif) with host ZMYND11/BS69 (via MYND-type zinc finger); this interaction inhibits E1A mediated transactivation. Interacts with host EP300; this interaction stimulates the acetylation of RB1 by recruiting EP300 and RB1 into a multimeric-protein complex. Interacts with host CTBP1 and CTBP2; this interaction seems to potentiate viral replication. Interacts with host DCAF7. Interacts with host DYRK1A. Interacts with host KPNA4; this interaction allows E1A import into the host nucleus. Interacts with host EP400; this interaction stabilizes MYC. Interacts with host TBP protein; this interaction probably disrupts the TBP-TATA complex.

It localises to the host nucleus. Plays a role in viral genome replication by driving entry of quiescent cells into the cell cycle. Stimulation of progression from G1 to S phase allows the virus to efficiently use the cellular DNA replicating machinery to achieve viral genome replication. E1A protein has both transforming and trans-activating activities. Induces the disassembly of the E2F1 transcription factor from RB1 by direct competition for the same binding site on RB1, with subsequent transcriptional activation of E2F1-regulated S-phase genes and of the E2 region of the adenoviral genome. Release of E2F1 leads to the ARF-mediated inhibition of MDM2 and causes TP53/p53 to accumulate because it is not targeted for degradation by MDM2-mediated ubiquitination anymore. This increase in TP53, in turn, would arrest the cell proliferation and direct its death but this effect is counteracted by the viral protein E1B-55K. Inactivation of the ability of RB1 to arrest the cell cycle is critical for cellular transformation, uncontrolled cellular growth and proliferation induced by viral infection. Interaction with RBX1 and CUL1 inhibits ubiquitination of the proteins targeted by SCF(FBXW7) ubiquitin ligase complex, and may be linked to unregulated host cell proliferation. The tumorigenesis-restraining activity of E1A may be related to the disruption of the host CtBP-CtIP complex through the CtBP binding motif. This chain is Early E1A protein, found in Canis lupus familiaris (Dog).